We begin with the raw amino-acid sequence, 421 residues long: UPF0415 protein C7orf25 homolog (421 aa).

This sequence belongs to the UPF0415 family.

The protein is UPF0415 protein C7orf25 homolog of Rattus norvegicus (Rat).